Here is a 301-residue protein sequence, read N- to C-terminus: Probable alpha-L-glutamate ligase (301 aa).

Residues 104 to 287 (LQILARKGIG…VAGKIIEYLE (184 aa)) enclose the ATP-grasp domain. ATP contacts are provided by residues Lys141, 178-179 (EY), Asp187, and 211-213 (RSN). Positions 248, 260, and 262 each coordinate Mg(2+). Asp248, Glu260, and Asn262 together coordinate Mn(2+).

This sequence belongs to the RimK family. Mg(2+) serves as cofactor. Requires Mn(2+) as cofactor.

The sequence is that of Probable alpha-L-glutamate ligase from Picosynechococcus sp. (strain ATCC 27264 / PCC 7002 / PR-6) (Agmenellum quadruplicatum).